A 556-amino-acid polypeptide reads, in one-letter code: Formate--tetrahydrofolate ligase 1 (556 aa).

Residue 65-72 participates in ATP binding; that stretch reads TPAGEGKS.

This sequence belongs to the formate--tetrahydrofolate ligase family.

The catalysed reaction is (6S)-5,6,7,8-tetrahydrofolate + formate + ATP = (6R)-10-formyltetrahydrofolate + ADP + phosphate. Its pathway is one-carbon metabolism; tetrahydrofolate interconversion. The protein is Formate--tetrahydrofolate ligase 1 of Streptococcus pyogenes serotype M18 (strain MGAS8232).